Consider the following 369-residue polypeptide: Anhydro-N-acetylmuramic acid kinase (369 aa).

Gly-12–Asp-19 serves as a coordination point for ATP.

This sequence belongs to the anhydro-N-acetylmuramic acid kinase family.

The catalysed reaction is 1,6-anhydro-N-acetyl-beta-muramate + ATP + H2O = N-acetyl-D-muramate 6-phosphate + ADP + H(+). The protein operates within amino-sugar metabolism; 1,6-anhydro-N-acetylmuramate degradation. It participates in cell wall biogenesis; peptidoglycan recycling. In terms of biological role, catalyzes the specific phosphorylation of 1,6-anhydro-N-acetylmuramic acid (anhMurNAc) with the simultaneous cleavage of the 1,6-anhydro ring, generating MurNAc-6-P. Is required for the utilization of anhMurNAc either imported from the medium or derived from its own cell wall murein, and thus plays a role in cell wall recycling. The sequence is that of Anhydro-N-acetylmuramic acid kinase from Shewanella sp. (strain ANA-3).